Reading from the N-terminus, the 44-residue chain is DNA-directed RNA polymerase subunit Rpo12 (44 aa).

3 residues coordinate Zn(2+): Cys-8, Cys-22, and Cys-25.

Belongs to the archaeal Rpo12/eukaryotic RPC10 RNA polymerase subunit family. Part of the RNA polymerase complex. The cofactor is Zn(2+).

The protein resides in the cytoplasm. The catalysed reaction is RNA(n) + a ribonucleoside 5'-triphosphate = RNA(n+1) + diphosphate. DNA-dependent RNA polymerase (RNAP) catalyzes the transcription of DNA into RNA using the four ribonucleoside triphosphates as substrates. This is DNA-directed RNA polymerase subunit Rpo12 from Haloquadratum walsbyi (strain DSM 16790 / HBSQ001).